The following is a 254-amino-acid chain: Probable electron transfer flavoprotein subunit beta (254 aa).

Belongs to the ETF beta-subunit/FixA family. As to quaternary structure, heterodimer of an alpha and a beta subunit. FAD is required as a cofactor. AMP serves as cofactor.

It localises to the mitochondrion matrix. In terms of biological role, the electron transfer flavoprotein serves as a specific electron acceptor for several dehydrogenases, including five acyl-CoA dehydrogenases, glutaryl-CoA and sarcosine dehydrogenase. It transfers the electrons to the main mitochondrial respiratory chain via ETF-ubiquinone oxidoreductase (ETF dehydrogenase). This Schizosaccharomyces pombe (strain 972 / ATCC 24843) (Fission yeast) protein is Probable electron transfer flavoprotein subunit beta.